The following is a 678-amino-acid chain: Vacuolar fusion protein mon1 (678 aa).

Disordered stretches follow at residues 1–116 (MDRD…YTSP), 449–474 (EENNSNNTNNPEQPPQPPPPKPVTSP), and 568–591 (FETSSPPLPSSSPSENGSSQKTTE). Over residues 10-20 (NDGTNDNNDTT) the composition is skewed to low complexity. A compositionally biased stretch (polar residues) spans 63-77 (RPTTQVSTIDISTLS). A compositionally biased stretch (low complexity) spans 87–105 (STSATSATSATSATRSVAS). Residues 106 to 116 (PQSSASGYTSP) show a composition bias toward polar residues. The segment covering 450 to 459 (ENNSNNTNNP) has biased composition (low complexity). Residues 460 to 471 (EQPPQPPPPKPV) are compositionally biased toward pro residues.

The protein belongs to the MON1/SAND family.

Its subcellular location is the endosome. It localises to the multivesicular body membrane. The protein localises to the prevacuolar compartment membrane. It is found in the vacuole membrane. Functionally, in complex with CCZ1, is required for multiple vacuole delivery pathways including the cytoplasm to vacuole transport (Cvt), autophagy, pexophagy and endocytosis. The MON1-CCZ1 complex acts at the fusion of vesicles with the vacuole, through its regulation of the SNARE complex during the coordinated priming and docking stages of fusion, and particularly at the stage of tethering/docking. This chain is Vacuolar fusion protein mon1 (apg-13), found in Neurospora crassa (strain ATCC 24698 / 74-OR23-1A / CBS 708.71 / DSM 1257 / FGSC 987).